Reading from the N-terminus, the 603-residue chain is Penicillin-binding protein activator LpoA (603 aa).

The signal sequence occupies residues 1–26 (MAMNHHQRRSVPRLLTPIALSIVLSA). A lipid anchor (N-palmitoyl cysteine) is attached at Cys27. A lipid anchor (S-diacylglycerol cysteine) is attached at Cys27.

The protein belongs to the LpoA family. Interacts with PBP1a.

The protein localises to the cell outer membrane. In terms of biological role, regulator of peptidoglycan synthesis that is essential for the function of penicillin-binding protein 1A (PBP1a). The polypeptide is Penicillin-binding protein activator LpoA (Vibrio cholerae serotype O1 (strain ATCC 39541 / Classical Ogawa 395 / O395)).